The following is a 62-amino-acid chain: Photosystem II reaction center protein Z (62 aa).

2 consecutive transmembrane segments (helical) span residues 8 to 28 and 41 to 61; these read ALFA…VAFA and FQGV…NSLV.

This sequence belongs to the PsbZ family. PSII is composed of 1 copy each of membrane proteins PsbA, PsbB, PsbC, PsbD, PsbE, PsbF, PsbH, PsbI, PsbJ, PsbK, PsbL, PsbM, PsbT, PsbY, PsbZ, Psb30/Ycf12, at least 3 peripheral proteins of the oxygen-evolving complex and a large number of cofactors. It forms dimeric complexes.

The protein localises to the plastid. It is found in the chloroplast thylakoid membrane. In terms of biological role, may control the interaction of photosystem II (PSII) cores with the light-harvesting antenna, regulates electron flow through the 2 photosystem reaction centers. PSII is a light-driven water plastoquinone oxidoreductase, using light energy to abstract electrons from H(2)O, generating a proton gradient subsequently used for ATP formation. This Nephroselmis olivacea (Green alga) protein is Photosystem II reaction center protein Z.